Reading from the N-terminus, the 133-residue chain is MSVNDPIGDMLTRIRNACMARHTTVTMPASKMKIAIADILKREGFIRDYTVIDDGKPYKTISITLKYMPDRRPAITGLRRVSKPGLRVYTKRADIPRVRGGLGLSILSTPKGVLADHEAWRARVGGEVLCYVW.

This sequence belongs to the universal ribosomal protein uS8 family. In terms of assembly, part of the 30S ribosomal subunit. Contacts proteins S5 and S12.

One of the primary rRNA binding proteins, it binds directly to 16S rRNA central domain where it helps coordinate assembly of the platform of the 30S subunit. The polypeptide is Small ribosomal subunit protein uS8 (Chloroflexus aggregans (strain MD-66 / DSM 9485)).